The chain runs to 534 residues: Endoglucanase 5 (534 aa).

A signal peptide spans 1–27; sequence MSDVSGRFVVAAAVVAVSLAMAAAAAA. The Nucleophile role is filled by aspartate 82. Active-site residues include histidine 432, aspartate 484, and glutamate 493. The segment at 515–534 is disordered; sequence RRRGEDAPPSSTSPVAEDDL.

It belongs to the glycosyl hydrolase 9 (cellulase E) family.

The protein resides in the secreted. The catalysed reaction is Endohydrolysis of (1-&gt;4)-beta-D-glucosidic linkages in cellulose, lichenin and cereal beta-D-glucans.. This is Endoglucanase 5 from Oryza sativa subsp. japonica (Rice).